Consider the following 755-residue polypeptide: Catalase-peroxidase (755 aa).

The segment at residues 91–245 (WHSAGTYRTA…LAAVQMGLIY (155 aa)) is a cross-link (tryptophyl-tyrosyl-methioninium (Trp-Tyr) (with M-271)). The Proton acceptor role is filled by His-92. The segment at 193 to 229 (DNRYGKDPESMQPPGEGTLVAEPAEHGNEESRTNQGE) is disordered. The segment covering 215–224 (PAEHGNEESR) has biased composition (basic and acidic residues). Positions 245 to 271 (YVNPEGPEGNPDPVASAKDIRETFGRM) form a cross-link, tryptophyl-tyrosyl-methioninium (Tyr-Met) (with W-91). A heme-binding site is contributed by His-286.

The protein belongs to the peroxidase family. Peroxidase/catalase subfamily. Homodimer or homotetramer. Heme b is required as a cofactor. In terms of processing, formation of the three residue Trp-Tyr-Met cross-link is important for the catalase, but not the peroxidase activity of the enzyme.

It carries out the reaction H2O2 + AH2 = A + 2 H2O. It catalyses the reaction 2 H2O2 = O2 + 2 H2O. In terms of biological role, bifunctional enzyme with both catalase and broad-spectrum peroxidase activity. This chain is Catalase-peroxidase, found in Pseudomonas fluorescens (strain Pf0-1).